The chain runs to 85 residues: uncharacterized protein (85 aa).

This is an uncharacterized protein from Bacillus subtilis (strain 168).